We begin with the raw amino-acid sequence, 137 residues long: Small ribosomal subunit protein uS9 (137 aa).

The segment at Asp-114–Arg-137 is disordered. Over residues Lys-118–Arg-137 the composition is skewed to basic residues.

It belongs to the universal ribosomal protein uS9 family.

The protein is Small ribosomal subunit protein uS9 of Rhodopirellula baltica (strain DSM 10527 / NCIMB 13988 / SH1).